The primary structure comprises 254 residues: MKDIIIASFYKFIPLNDFESLREPILTKMHEIGIKGTIILAHEGVNGGFAGNREQMNVFYDYLRSDSRFADLHFKETYDNKNPFDKAKVKLRKEIVTMGVQKVDPSYNTGTYLSPEEWHQFIQDPNVILLDTRNDYEYELGTFKNAINPDIENFREFPDYVQRNLIDKKDKKIAMFCTGGIRCEKTTAYMKEQGFQHVYQLHDGILNYLESIPESESLWEGKCFVFDDRVAVDQKLDRVYPQLPQDYKYEREQK.

Positions 123 to 217 constitute a Rhodanese domain; sequence QDPNVILLDT…YLESIPESES (95 aa). Catalysis depends on Cys-177, which acts as the Cysteine persulfide intermediate.

It belongs to the TrhO family.

The catalysed reaction is uridine(34) in tRNA + AH2 + O2 = 5-hydroxyuridine(34) in tRNA + A + H2O. Functionally, catalyzes oxygen-dependent 5-hydroxyuridine (ho5U) modification at position 34 in tRNAs. This chain is tRNA uridine(34) hydroxylase, found in Legionella pneumophila (strain Paris).